A 76-amino-acid chain; its full sequence is Senegalin (76 aa).

Residues 1–22 form the signal peptide; it reads MLSLKKSMLLLFFLGMVSFSLA. Positions 23–55 are excised as a propeptide; the sequence is NKRSDGKRADEEGEDKRADEEGEDKRADEEGED. The interval 24–54 is disordered; the sequence is KRSDGKRADEEGEDKRADEEGEDKRADEEGE. The residue at position 75 (Leu75) is a Leucine amide.

Expressed by the skin glands.

The protein resides in the secreted. Antimicrobial peptide with activity against the Gram-positive bacterium S.aureus NCTC 10788 (MIC=50 um) and the yeast C.albicans NCPF 1467 (MIC=150 uM). Ineffective against the Gram-negative bacterium E.coli NCTC 10418. Induces a dose-dependent contraction of rat urinary bladder smooth muscle (EC50=2.9 nM) and a dose-dependent relaxation of rat tail artery smooth muscle (EC50=37.7 nM). This is Senegalin from Kassina senegalensis (Senegal running frog).